A 145-amino-acid polypeptide reads, in one-letter code: D-aminoacyl-tRNA deacylase (145 aa).

Residues 137–138 (GP) carry the Gly-cisPro motif, important for rejection of L-amino acids motif.

It belongs to the DTD family. In terms of assembly, homodimer.

The protein localises to the cytoplasm. The catalysed reaction is glycyl-tRNA(Ala) + H2O = tRNA(Ala) + glycine + H(+). The enzyme catalyses a D-aminoacyl-tRNA + H2O = a tRNA + a D-alpha-amino acid + H(+). Functionally, an aminoacyl-tRNA editing enzyme that deacylates mischarged D-aminoacyl-tRNAs. Also deacylates mischarged glycyl-tRNA(Ala), protecting cells against glycine mischarging by AlaRS. Acts via tRNA-based rather than protein-based catalysis; rejects L-amino acids rather than detecting D-amino acids in the active site. By recycling D-aminoacyl-tRNA to D-amino acids and free tRNA molecules, this enzyme counteracts the toxicity associated with the formation of D-aminoacyl-tRNA entities in vivo and helps enforce protein L-homochirality. This chain is D-aminoacyl-tRNA deacylase, found in Alteromonas mediterranea (strain DSM 17117 / CIP 110805 / LMG 28347 / Deep ecotype).